The primary structure comprises 1099 residues: R3H domain-containing protein 1 (1099 aa).

Positions 111–146 are disordered; that stretch reads SFEKEEKPSKDEAEKEKASDKLPRKMLSRDSSQEYT. Residues 112–142 are compositionally biased toward basic and acidic residues; the sequence is FEKEEKPSKDEAEKEKASDKLPRKMLSRDSS. Residues 168 to 231 enclose the R3H domain; sequence RMMLLKLEQE…SVIVNKTSNT (64 aa). Residues Ser187 and Ser262 each carry the phosphoserine modification. Positions 232 to 302 constitute an SUZ domain; it reads RIPDQKFNEH…ARDRIFSQDS (71 aa). The segment at 267-287 is disordered; sequence DNQMRIRLKDDRRSKSIEERE. A Phosphoserine modification is found at Ser302. The segment at 331-370 is disordered; it reads RVNKDASGRSTNSHQSSTENELKYSEPRPWSSTDSDSSLR. 2 stretches are compositionally biased toward polar residues: residues 338 to 349 and 360 to 370; these read GRSTNSHQSSTE and WSSTDSDSSLR. Phosphoserine is present on residues Ser380, Ser381, and Ser393. Disordered regions lie at residues 387-439, 490-537, 583-625, and 797-825; these read VLTR…SSHG, QTGQ…AANH, YIMT…HPVS, and EQVQFPRTTSPCSSQQLQGHQCTAGPPPP. The span at 391–422 shows a compositional bias: low complexity; it reads GDSSGSSKSIGRLSKTGSESSGSVGSSTGSLS. Composition is skewed to pro residues over residues 519-532 and 588-611; these read PGPPQPPLPAPPQQ and APPPHPPPPPPPPPPPPPLPPGQP. The segment covering 797–817 has biased composition (polar residues); it reads EQVQFPRTTSPCSSQQLQGHQ. Arg929 carries the post-translational modification Asymmetric dimethylarginine; alternate. Position 929 is an omega-N-methylarginine; alternate (Arg929). Residues 941–977 form a disordered region; sequence PPAVLHGHIPNQQGQPGSRHGNRGRRQAKKAASTDLG. A compositionally biased stretch (basic residues) spans 960–969; sequence HGNRGRRQAK. Ser973 is subject to Phosphoserine.

This Homo sapiens (Human) protein is R3H domain-containing protein 1 (R3HDM1).